The chain runs to 201 residues: Probable chemoreceptor glutamine deamidase CheD (201 aa).

This sequence belongs to the CheD family.

The enzyme catalyses L-glutaminyl-[protein] + H2O = L-glutamyl-[protein] + NH4(+). In terms of biological role, probably deamidates glutamine residues to glutamate on methyl-accepting chemotaxis receptors (MCPs), playing an important role in chemotaxis. The sequence is that of Probable chemoreceptor glutamine deamidase CheD from Chlorobium luteolum (strain DSM 273 / BCRC 81028 / 2530) (Pelodictyon luteolum).